A 112-amino-acid chain; its full sequence is Large ribosomal subunit protein eL30 (112 aa).

It belongs to the eukaryotic ribosomal protein eL30 family.

This is Large ribosomal subunit protein eL30 (RPL30) from Lupinus luteus (European yellow lupine).